Here is a 494-residue protein sequence, read N- to C-terminus: Fumarate hydratase, mitochondrial (494 aa).

Residues Met1 to Asn15 constitute a mitochondrion transit peptide. Substrate-binding positions include Ser128–Thr130, His159–Asp162, Ser169–Asn171, and Thr217. The active-site Proton donor/acceptor is His218. Residue Ser348 is part of the active site. Residues Ser349 and Lys354 to Asn356 contribute to the substrate site.

It belongs to the class-II fumarase/aspartase family. Fumarase subfamily. In terms of assembly, homotetramer.

It localises to the mitochondrion matrix. Its subcellular location is the cytoplasm. The protein resides in the nucleus. The catalysed reaction is (S)-malate = fumarate + H2O. It participates in carbohydrate metabolism; tricarboxylic acid cycle; (S)-malate from fumarate: step 1/1. Functionally, catalyzes the reversible stereospecific interconversion of fumarate to L-malate. In mitochondrion, catalyzes the hydration of fumarate to L-malate in the tricarboxylic acid (TCA) cycle to facilitate a transition step in the production of energy in the form of NADH. In cytoplasm and nucleus, involved in DNA repair in response to DNA damage: following DNA double-strand breaks (DSBs), translocates from the cytosol to the nucleus and promotes DNA repair by catalyzing the dehydration of L-malate to fumarate. The sequence is that of Fumarate hydratase, mitochondrial from Rhizopus oryzae (Mucormycosis agent).